We begin with the raw amino-acid sequence, 473 residues long: RuvB-like helicase 2 (473 aa).

76–83 (GPPSTGKT) lines the ATP pocket.

The protein belongs to the RuvB family. In terms of assembly, may form heterododecamers with RVB1. Component of the SWR1 chromatin remodeling complex, the INO80 chromatin remodeling complex, and of the R2TP complex.

It localises to the nucleus. The enzyme catalyses ATP + H2O = ADP + phosphate + H(+). Its function is as follows. DNA helicase which participates in several chromatin remodeling complexes, including the SWR1 and the INO80 complexes. The SWR1 complex mediates the ATP-dependent exchange of histone H2A for the H2A variant HZT1 leading to transcriptional regulation of selected genes by chromatin remodeling. The INO80 complex remodels chromatin by shifting nucleosomes and is involved in DNA repair. Also involved in pre-rRNA processing. The sequence is that of RuvB-like helicase 2 (RVB2) from Gibberella zeae (strain ATCC MYA-4620 / CBS 123657 / FGSC 9075 / NRRL 31084 / PH-1) (Wheat head blight fungus).